A 614-amino-acid polypeptide reads, in one-letter code: Laccase 1 (614 aa).

The N-terminal stretch at 1 to 21 is a signal peptide; sequence MSRFARLLLMVVALFFTNAWA. 2 consecutive Plastocyanin-like domains span residues 30-143 and 172-360; these read ITWK…IRPK and YLVV…MRIP. Asparagine 75 carries N-linked (GlcNAc...) asparagine glycosylation. Cu cation contacts are provided by histidine 79, histidine 81, histidine 123, and histidine 125. Residues asparagine 257, asparagine 280, asparagine 445, asparagine 469, and asparagine 485 are each glycosylated (N-linked (GlcNAc...) asparagine). Residues 469–599 enclose the Plastocyanin-like 3 domain; the sequence is NATRDTENDG…GGMGIAILDG (131 aa). Residues histidine 507, histidine 510, and histidine 512 each contribute to the Cu cation site. An N-linked (GlcNAc...) asparagine glycan is attached at asparagine 527. Cu cation-binding residues include histidine 581, cysteine 582, histidine 583, and histidine 587.

Belongs to the multicopper oxidase family. The cofactor is Cu cation.

It localises to the cell surface. The protein operates within pigment biosynthesis. Laccase; part of the Pks1 gene cluster that mediates the biosynthesis of an anthraquinone derivative pigment that contributes to conidial pigmentation that provides protection from UV radiation, heat and cold stress. The polyketide synthase Pks1 produces 1-acetyl-2,4,6,8-tetrahydroxy-9,10-anthraquinone though condensation of acetyl-CoA with malonyl-CoA. The dehydratase EthD and the laccase Mlac1 further convert the anthraquinone derivative into the final conidial pigment. This Metarhizium majus (strain ARSEF 297) protein is Laccase 1.